A 236-amino-acid polypeptide reads, in one-letter code: Leucyl/phenylalanyl-tRNA--protein transferase (236 aa).

Belongs to the L/F-transferase family.

The protein resides in the cytoplasm. The catalysed reaction is N-terminal L-lysyl-[protein] + L-leucyl-tRNA(Leu) = N-terminal L-leucyl-L-lysyl-[protein] + tRNA(Leu) + H(+). It carries out the reaction N-terminal L-arginyl-[protein] + L-leucyl-tRNA(Leu) = N-terminal L-leucyl-L-arginyl-[protein] + tRNA(Leu) + H(+). The enzyme catalyses L-phenylalanyl-tRNA(Phe) + an N-terminal L-alpha-aminoacyl-[protein] = an N-terminal L-phenylalanyl-L-alpha-aminoacyl-[protein] + tRNA(Phe). Its function is as follows. Functions in the N-end rule pathway of protein degradation where it conjugates Leu, Phe and, less efficiently, Met from aminoacyl-tRNAs to the N-termini of proteins containing an N-terminal arginine or lysine. This Shewanella sp. (strain ANA-3) protein is Leucyl/phenylalanyl-tRNA--protein transferase.